A 373-amino-acid chain; its full sequence is Extensin-1 (373 aa).

The signal sequence occupies residues 1–19 (MASFLVLAFSLAFVSQTTA). 36 repeat units span residues 25–33 (SPPPPVKHY), 34–40 (SPPPVYK), 41–49 (SPPPPVKHY), 50–56 (SPPPVYK), 57–65 (SPPPPVKHY), 66–72 (SPPPVYK), 73–81 (SPPPPVKYY), 82–88 (SPPPVYK), 97–105 (SPPPPVKHY), 106–112 (SPPPVYK), 113–121 (SPPPPVKHY), 122–128 (SPPPVYK), 129–137 (SPPPPVKHY), 138–144 (SPPPVYK), 145–153 (SPPPPVKHY), 154–160 (SPPPVYK), 161–169 (SPPPPVKYY), 170–176 (SPPPVYK), 177–185 (SPPPPVKHY), 186–192 (SPPPVYK), 193–201 (SPPPPVKYY), 202–208 (SPPPVYK), 209–217 (SPPPPVKHY), 218–224 (SPPPVYK), 225–233 (SPPPPVKYY), 234–240 (SPPPVYK), 241–248 (SPPPPVHY), 249–256 (SPPPVVYH), 257–264 (SPPPPVHY), 265–272 (SPPPVVYH), 273–280 (SPPPPVHY), 281–288 (SPPPVVYH), 289–296 (SPPPPVHY), 297–304 (SPPPVVYH), 305–312 (SPPPPVHY), and 313–320 (SPPPVVYH). The interval 25–233 (SPPPPVKHYS…KSPPPPVKYY (209 aa)) is 13 X 9 AA repeats of S-P-P-P-P-V-K-[HY]-Y. Residues 34–240 (SPPPVYKSPP…KYYSPPPVYK (207 aa)) form a 13 X 7 AA repeats of S-P-P-P-V-Y-K region. Positions 241–312 (SPPPPVHYSP…YHSPPPPVHY (72 aa)) are 5 X 8 AA repeats of S-P-P-P-P-V-H-Y. The segment at 249 to 320 (SPPPVVYHSP…HYSPPPVVYH (72 aa)) is 5 X 8 AA repeats of S-P-P-P-V-V-Y-H. Isodityrosine cross-linking stretches follow at residues 329 to 332 (YEYK) and 363 to 366 (YLYK). Residues 349–373 (PPPPVHHYSPPHQPYLYKSPPPPHY) form a disordered region.

Belongs to the extensin family. Post-translationally, extensins contain a characteristic repeat of the pentapeptide Ser-Pro(4). For this particular extensin, a typical repeat of Ser-Pro(3) is found. In both cases, the proline residues are hydroxylated and then O-glycosylated (arabinosylation). Synthetised as soluble proteins which become insolubilised in the cell wall through the intermolecular cross-linking of Tyr on adjacent monomers. Isodityrosine (IDT) stabilizes and makes rigid the part of the polypeptide where IDT functional sites are present. In terms of tissue distribution, predominantly expressed in the roots. Not detected in the leaves, nor in flowers or flower buds. Wounding reverses this pattern, turning on the gene in the leaves and repressing it in the roots.

The protein resides in the secreted. The protein localises to the primary cell wall. In terms of biological role, structural component which strengthens the primary cell wall. The protein is Extensin-1 of Arabidopsis thaliana (Mouse-ear cress).